The primary structure comprises 308 residues: Protein translocase subunit SecF (308 aa).

Helical transmembrane passes span 12–32, 127–147, 152–172, 182–202, 234–254, and 262–282; these read YFIF…TKGF, AKNA…YITI, IYAL…IGFI, PFIA…IVIF, VYTS…GGST, and LLVG…PLVY.

The protein belongs to the SecD/SecF family. SecF subfamily. Forms a complex with SecD. Part of the essential Sec protein translocation apparatus which comprises SecA, SecYEG and auxiliary proteins SecDF. Other proteins may also be involved.

The protein resides in the cell inner membrane. Part of the Sec protein translocase complex. Interacts with the SecYEG preprotein conducting channel. SecDF uses the proton motive force (PMF) to complete protein translocation after the ATP-dependent function of SecA. The sequence is that of Protein translocase subunit SecF from Sebaldella termitidis (strain ATCC 33386 / NCTC 11300).